We begin with the raw amino-acid sequence, 192 residues long: UPF0301 protein Bphyt_0868 (192 aa).

This sequence belongs to the UPF0301 (AlgH) family.

The chain is UPF0301 protein Bphyt_0868 from Paraburkholderia phytofirmans (strain DSM 17436 / LMG 22146 / PsJN) (Burkholderia phytofirmans).